The chain runs to 30 residues: Cyclotide cter-P (30 aa).

Residues 1–30 (GIPCGESCVFIPCITAAIGCSCKSKVCYRN) constitute a cross-link (cyclopeptide (Gly-Asn)). Cystine bridges form between cysteine 4/cysteine 20, cysteine 8/cysteine 22, and cysteine 13/cysteine 27.

Post-translationally, this is a cyclic peptide.

It is found in the secreted. Functionally, probably participates in a plant defense mechanism. This chain is Cyclotide cter-P, found in Clitoria ternatea (Butterfly pea).